We begin with the raw amino-acid sequence, 115 residues long: Glycine cleavage system H-like protein (115 aa).

Residues 17–99 (VVRLGLTEKM…EGEGWLAVVR (83 aa)) enclose the Lipoyl-binding domain. Position 58 is an N6-lipoyllysine (lysine 58).

It belongs to the GcvH family. The cofactor is (R)-lipoate.

The protein is Glycine cleavage system H-like protein of Chlamydia pneumoniae (Chlamydophila pneumoniae).